A 447-amino-acid polypeptide reads, in one-letter code: Serine/threonine-protein kinase NLK2 (447 aa).

A Protein kinase domain is found at 60 to 349 (PEPDRPIGYG…AKDALAHPYL (290 aa)). ATP contacts are provided by residues 66-74 (IGYGAFGVV) and Lys-89. Asp-186 (proton acceptor) is an active-site residue.

This sequence belongs to the protein kinase superfamily. CMGC Ser/Thr protein kinase family. MAP kinase subfamily. Interacts with sox11, hmgxb4/hmg2l1, rnf138/narf, stat3.1 and mef2a. Mg(2+) is required as a cofactor. As to expression, expressed widely in the ectoderm during early gastrula stage when neural induction is taking place. Expressed in the head region of neurula stage embryos. At the end of neurulation, expression becomes localized to the nervous system, and is restricted to the central nervous system, eye and head neural crest cells by the early tadpole stages.

Its subcellular location is the nucleus. It localises to the cytoplasm. It carries out the reaction L-seryl-[protein] + ATP = O-phospho-L-seryl-[protein] + ADP + H(+). The catalysed reaction is L-threonyl-[protein] + ATP = O-phospho-L-threonyl-[protein] + ADP + H(+). Activated by tyrosine and threonine phosphorylation. Functionally, negatively regulates Wnt/beta-catenin-signaling during development. Plays a role together with sox11 in neural induction during early embryogenesis. Involved in TGFbeta-mediated mesoderm induction in early embryos, acting downstream of map3k7/tak1 to phosphorylate stat3.1. Augments the rnf138/narf-directed ubiquitination and degradation of tcf/lef by enhancing the association of rnf138/narf and tcf/lef. Phosphorylates mef2a to play a role in anterior neural development, including eye formation. The polypeptide is Serine/threonine-protein kinase NLK2 (nlk.2) (Xenopus laevis (African clawed frog)).